The sequence spans 39 residues: Cytochrome b559 subunit beta (39 aa).

A helical membrane pass occupies residues tryptophan 14–serine 30. A heme-binding site is contributed by histidine 18.

It belongs to the PsbE/PsbF family. As to quaternary structure, heterodimer of an alpha subunit and a beta subunit. PSII is composed of 1 copy each of membrane proteins PsbA, PsbB, PsbC, PsbD, PsbE, PsbF, PsbH, PsbI, PsbJ, PsbK, PsbL, PsbM, PsbT, PsbX, PsbY, PsbZ, Psb30/Ycf12, at least 3 peripheral proteins of the oxygen-evolving complex and a large number of cofactors. It forms dimeric complexes. It depends on heme b as a cofactor.

Its subcellular location is the plastid. The protein localises to the chloroplast thylakoid membrane. Functionally, this b-type cytochrome is tightly associated with the reaction center of photosystem II (PSII). PSII is a light-driven water:plastoquinone oxidoreductase that uses light energy to abstract electrons from H(2)O, generating O(2) and a proton gradient subsequently used for ATP formation. It consists of a core antenna complex that captures photons, and an electron transfer chain that converts photonic excitation into a charge separation. The polypeptide is Cytochrome b559 subunit beta (Allium textile (Textile onion)).